A 201-amino-acid chain; its full sequence is Oxalate oxidase 1 (201 aa).

The cysteines at positions 10 and 26 are disulfide-linked. Residues 40-191 (SKLTKAGNTS…ALRVEAGVVE (152 aa)) form the Cupin type-1 domain. N47 carries N-linked (GlcNAc...) asparagine glycosylation. The oxalate site is built by N75 and N85. Mn(2+) is bound by residues H88, H90, E95, and H137. 2 residues coordinate oxalate: H90 and E95.

Belongs to the germin family. As to quaternary structure, homo hexamer; a trimer of dimers. In terms of processing, glycosylated. A form called G contains antennary GlcNAc residues, whereas a form called G' lacks antennary GlcNAc residues in its otherwise identical glycans.

The protein resides in the secreted. The protein localises to the extracellular space. It localises to the apoplast. Its subcellular location is the cell wall. The enzyme catalyses oxalate + O2 + 2 H(+) = H2O2 + 2 CO2. Its function is as follows. Releases hydrogen peroxide in the apoplast which may be important for cross-linking reactions in the cell wall biochemistry. May play an important role in several aspects of plant growth and defense mechanisms. The protein is Oxalate oxidase 1 of Hordeum vulgare (Barley).